The chain runs to 208 residues: MIGLVGRKVGMTRIFNEDGVSVPVTVIEIEANRVTQVKTLENDGYTAVQVTTGSKKANRVTKPEAGHFVKAGVEAGRGLWEFRTEGEEFTLGQEINVDIFADVKKVDVTGTSKGKGFQGGVKRWNFRTQDATHGNSLSHRVLGSIGQNQTPGRVFKGKKMAGHLGAERVTVQSLEVVRVDAERKLLLVKGSVPGAINGDVIVKPAVKA.

Gln149 is subject to N5-methylglutamine.

This sequence belongs to the universal ribosomal protein uL3 family. As to quaternary structure, part of the 50S ribosomal subunit. Forms a cluster with proteins L14 and L19. Post-translationally, methylated by PrmB.

In terms of biological role, one of the primary rRNA binding proteins, it binds directly near the 3'-end of the 23S rRNA, where it nucleates assembly of the 50S subunit. The protein is Large ribosomal subunit protein uL3 of Haemophilus influenzae (strain 86-028NP).